We begin with the raw amino-acid sequence, 549 residues long: DNA 3'-5' helicase XPB (549 aa).

A required for protein stability or solubility region spans residues 1–130; sequence MTDGPLIVQS…RNKKIAPMLG (130 aa). The region spanning 190–344 is the Helicase ATP-binding domain; that stretch reads ADSFWAGGSG…DVFSLIGPKR (155 aa). Position 203–210 (203–210) interacts with ATP; sequence LPCGAGKT. A DEAH box motif is present at residues 298–301; that stretch reads DEVH. The Helicase C-terminal domain occupies 399–545; that stretch reads VVKSILAKHP…YIIRDADDLL (147 aa).

This sequence belongs to the helicase family. RAD25/XPB subfamily. In terms of assembly, monomer. Requires Mn(2+) as cofactor. The cofactor is Mg(2+).

The catalysed reaction is Couples ATP hydrolysis with the unwinding of duplex DNA by translocating in the 3'-5' direction.. It carries out the reaction ATP + H2O = ADP + phosphate + H(+). ATP-dependent 3'-5' DNA helicase, unwinds 3'-overhangs, 3'- flaps, and splayed-arm DNA substrates but not 5'-overhangs, 5'-flap substrates, 3-way junctions or Holliday junctions. Not highly efficient in vitro. Requires ATP hydrolysis for helicase activity; the ATPase activity is DNA-dependent and requires a minimum of 4 single-stranded nucleotides (nt) with 6-10 nt providing all necessary interactions for full processive unwinding. The ATPase prefers ATP over CTP or GTP, is almost inactive with TTP. DNA helicase activity requires ATP or dATP and only acts when the 3'-overhang is &gt;20 nt. Capable of unwinding a DNA:RNA hybrid if the 3'-overhang is DNA. Also catalyzes ATP-independent annealing of complementary DNA strands; annealing requires Mg(2+). The polypeptide is DNA 3'-5' helicase XPB (Mycobacterium tuberculosis (strain ATCC 25618 / H37Rv)).